The chain runs to 301 residues: Probable tRNA pseudouridine synthase B (301 aa).

Aspartate 54 (nucleophile) is an active-site residue. Residues 227–301 (LPRLTIADSA…VVVALERVLV (75 aa)) form the PUA domain.

The protein belongs to the pseudouridine synthase TruB family. Type 2 subfamily.

The catalysed reaction is uridine(55) in tRNA = pseudouridine(55) in tRNA. Functionally, could be responsible for synthesis of pseudouridine from uracil-55 in the psi GC loop of transfer RNAs. The polypeptide is Probable tRNA pseudouridine synthase B (Halobacterium salinarum (strain ATCC 29341 / DSM 671 / R1)).